A 393-amino-acid chain; its full sequence is Nucleoside permease NupC (393 aa).

A run of 9 helical transmembrane segments spans residues 3–23 (YLIG…ASSG), 32–52 (IVVM…TGIG), 87–107 (TTFF…IGIL), 168–188 (LCAS…MTML), 191–211 (EYVV…ASII), 249–269 (VVVA…NGIF), 272–292 (VFGI…AFLV), 334–354 (AIVS…IIAG), and 372–392 (LKLL…VGLI).

This sequence belongs to the concentrative nucleoside transporter (CNT) (TC 2.A.41) family.

Its subcellular location is the cell membrane. Its function is as follows. Transport of the pyrimidine nucleoside uridine. The protein is Nucleoside permease NupC of Bacillus subtilis (strain 168).